A 169-amino-acid polypeptide reads, in one-letter code: Sec-independent protein translocase protein TatB (169 aa).

A helical membrane pass occupies residues 2–22 (SPGIGMPELLVVLVLALVVVG). The segment at 106–169 (NQAETDADKA…AKPVDEIKGR (64 aa)) is disordered.

It belongs to the TatB family. As to quaternary structure, the Tat system comprises two distinct complexes: a TatABC complex, containing multiple copies of TatA, TatB and TatC subunits, and a separate TatA complex, containing only TatA subunits. Substrates initially bind to the TatABC complex, which probably triggers association of the separate TatA complex to form the active translocon.

It is found in the cell inner membrane. In terms of biological role, part of the twin-arginine translocation (Tat) system that transports large folded proteins containing a characteristic twin-arginine motif in their signal peptide across membranes. Together with TatC, TatB is part of a receptor directly interacting with Tat signal peptides. TatB may form an oligomeric binding site that transiently accommodates folded Tat precursor proteins before their translocation. The sequence is that of Sec-independent protein translocase protein TatB from Maricaulis maris (strain MCS10) (Caulobacter maris).